The following is a 551-amino-acid chain: Solute carrier family 22 member 3 (551 aa).

The chain crosses the membrane as a helical span at residues 21-41; that stretch reads VFLLLCLTGVTFAFLFVGVVF. N-linked (GlcNAc...) asparagine glycosylation is found at asparagine 72, asparagine 99, and asparagine 114. A helical transmembrane segment spans residues 177–197; the sequence is LIIYLISCFGVGITGVVVAFA. N-linked (GlcNAc...) asparagine glycosylation occurs at asparagine 199. Helical transmembrane passes span 236–256 and 264–284; these read IVGIVIQMFFTLGIIILPGIA and GIQLAISLPSFLFLLYYWVVP. Residues 284-288 carry the Proline-rich sequence motif; it reads PESPR. An N-linked (GlcNAc...) asparagine glycan is attached at asparagine 317. The next 3 membrane-spanning stretches (helical) occupy residues 376–396, 464–484, and 493–513; these read IDFFISGLVELPGALLILLTI, GVSLCSGLCDFGGIIAPFLLF, and LPLIIFGILASVCGGLVMLLP.

The protein belongs to the major facilitator (TC 2.A.1) superfamily. Organic cation transporter (TC 2.A.1.19) family. In terms of tissue distribution, highly expressed in placenta. Highly expressed in kidney cortex. In kidney, expressed specifically in the proximal and distal convoluted tubules and within Bowman capsule. Expressed in brain, particularly in dopaminergic neurons of the substantia nigra compacta, non-aminergic neurons of the ventral tegmental area, substantia nigra reticulata, locus coeruleus, hippocampus and cortex. In brain, also detected in astrocytes in the substantia nigra reticulata, several hypothalamic nuclei and nigrostriatal region. Expressed in neurons and glial cells of amygdala.

Its subcellular location is the cell membrane. It is found in the apical cell membrane. The protein resides in the basolateral cell membrane. It localises to the mitochondrion membrane. The protein localises to the endomembrane system. Its subcellular location is the nucleus membrane. It is found in the nucleus outer membrane. It carries out the reaction (R)-noradrenaline(out) = (R)-noradrenaline(in). The catalysed reaction is (R)-adrenaline(out) = (R)-adrenaline(in). It catalyses the reaction serotonin(out) = serotonin(in). The enzyme catalyses dopamine(out) = dopamine(in). It carries out the reaction histamine(out) = histamine(in). The catalysed reaction is tyramine(in) = tyramine(out). It catalyses the reaction guanidine(out) = guanidine(in). The enzyme catalyses agmatine(out) = agmatine(in). It carries out the reaction spermidine(in) = spermidine(out). The catalysed reaction is L-histidyl-L-proline diketopiperazine(in) = L-histidyl-L-proline diketopiperazine(out). It catalyses the reaction (R)-salsolinol(in) = (R)-salsolinol(out). In terms of biological role, electrogenic voltage-dependent transporter that mediates the transport of a variety of organic cations such as endogenous bioactive amines, cationic drugs and xenobiotics. Cation cellular uptake or release is driven by the electrochemical potential, i.e. membrane potential and concentration gradient. Functions as a Na(+)- and Cl(-)-independent, bidirectional uniporter. Implicated in monoamine neurotransmitters uptake such as dopamine, adrenaline/epinephrine, noradrenaline/norepinephrine, homovanillic acid, histamine, serotonin and tyramine, thereby supporting a role in homeostatic regulation of aminergic neurotransmission in the brain. Transports dopaminergic neuromodulators cyclo(his-pro) and salsolinol with low efficiency. May be involved in the uptake and disposition of cationic compounds by renal clearance from the blood flow. May contribute to regulate the transport of cationic compounds in testis across the blood-testis-barrier. Mediates the transport of polyamine spermidine and putrescine. Mediates the bidirectional transport of polyamine agmatine. Also transports guanidine. May also mediate intracellular transport of organic cations, thereby playing a role in amine metabolism and intracellular signaling. The polypeptide is Solute carrier family 22 member 3 (Mus musculus (Mouse)).